The chain runs to 348 residues: Histidinol-phosphate aminotransferase (348 aa).

Position 211 is an N6-(pyridoxal phosphate)lysine (Lys211).

This sequence belongs to the class-II pyridoxal-phosphate-dependent aminotransferase family. Histidinol-phosphate aminotransferase subfamily. As to quaternary structure, homodimer. Requires pyridoxal 5'-phosphate as cofactor.

It catalyses the reaction L-histidinol phosphate + 2-oxoglutarate = 3-(imidazol-4-yl)-2-oxopropyl phosphate + L-glutamate. It participates in amino-acid biosynthesis; L-histidine biosynthesis; L-histidine from 5-phospho-alpha-D-ribose 1-diphosphate: step 7/9. The polypeptide is Histidinol-phosphate aminotransferase (Pseudomonas entomophila (strain L48)).